The primary structure comprises 239 residues: Trimethylguanosine synthase (239 aa).

Belongs to the methyltransferase superfamily. Trimethylguanosine synthase family. Monomer. Interacts with mug174; both proteins are required to maintain Cajal body integrity.

Its subcellular location is the nucleus. The protein localises to the cajal body. It catalyses the reaction a 5'-end (N(7)-methyl 5'-triphosphoguanosine)-ribonucleoside in snRNA + S-adenosyl-L-methionine = a 5'-end (N(2),N(7)-dimethyl 5'-triphosphoguanosine)-ribonucleoside in snRNA + S-adenosyl-L-homocysteine + H(+). It carries out the reaction a 5'-end (N(7)-methyl 5'-triphosphoguanosine)-ribonucleoside in snoRNA + S-adenosyl-L-methionine = a 5'-end (N(2),N(7)-dimethyl 5'-triphosphoguanosine)-ribonucleoside in snoRNA + S-adenosyl-L-homocysteine + H(+). The enzyme catalyses a 5'-end (N(2),N(7)-dimethyl 5'-triphosphoguanosine)-ribonucleoside in snRNA + S-adenosyl-L-methionine = a 5'-end (N(2),N(2),N(7)-trimethyl 5'-triphosphoguanosine)-ribonucleoside in snRNA + S-adenosyl-L-homocysteine + H(+). The catalysed reaction is a 5'-end (N(2),N(7)-dimethyl 5'-triphosphoguanosine)-ribonucleoside in snoRNA + S-adenosyl-L-methionine = a 5'-end (N(2),N(2),N(7)-trimethyl 5'-triphosphoguanosine)-ribonucleoside in snoRNA + S-adenosyl-L-homocysteine + H(+). Substrate inhibited by S-adenosyl-L-homocysteine. Catalyzes the two serial methylation steps for the conversion of the 7-monomethylguanosine (m(7)G) caps of snRNAs and snoRNAs to a 2,2,7-trimethylguanosine (m(2,2,7)G) cap structure. The enzyme is specific for guanine, and N7 methylation must precede N2 methylation. Required for pre-mRNA splicing, pre-rRNA processing and small ribosomal subunit synthesis. Involved in nucleolar structural organization. In Schizosaccharomyces pombe (strain 972 / ATCC 24843) (Fission yeast), this protein is Trimethylguanosine synthase (tgs1).